The following is a 395-amino-acid chain: Elongation factor Tu (395 aa).

The tr-type G domain occupies 10–204; it reads KPHVNVGTIG…AVDNWVPLPE (195 aa). Positions 19–26 are G1; it reads GHVDHGKT. 19–26 is a GTP binding site; that stretch reads GHVDHGKT. Residue threonine 26 participates in Mg(2+) binding. The tract at residues 60–64 is G2; sequence GITIN. The segment at 81–84 is G3; sequence DCPG. GTP is bound by residues 81–85 and 136–139; these read DCPGH and NKCD. The tract at residues 136–139 is G4; sequence NKCD. A G5 region spans residues 174 to 176; sequence SAL.

Belongs to the TRAFAC class translation factor GTPase superfamily. Classic translation factor GTPase family. EF-Tu/EF-1A subfamily. As to quaternary structure, monomer.

It localises to the cytoplasm. The catalysed reaction is GTP + H2O = GDP + phosphate + H(+). Functionally, GTP hydrolase that promotes the GTP-dependent binding of aminoacyl-tRNA to the A-site of ribosomes during protein biosynthesis. The sequence is that of Elongation factor Tu from Porphyromonas gingivalis (strain ATCC 33277 / DSM 20709 / CIP 103683 / JCM 12257 / NCTC 11834 / 2561).